A 239-amino-acid polypeptide reads, in one-letter code: Phosphoribosylaminoimidazole-succinocarboxamide synthase (239 aa).

Belongs to the SAICAR synthetase family.

It carries out the reaction 5-amino-1-(5-phospho-D-ribosyl)imidazole-4-carboxylate + L-aspartate + ATP = (2S)-2-[5-amino-1-(5-phospho-beta-D-ribosyl)imidazole-4-carboxamido]succinate + ADP + phosphate + 2 H(+). It participates in purine metabolism; IMP biosynthesis via de novo pathway; 5-amino-1-(5-phospho-D-ribosyl)imidazole-4-carboxamide from 5-amino-1-(5-phospho-D-ribosyl)imidazole-4-carboxylate: step 1/2. In Acinetobacter baumannii (strain AB307-0294), this protein is Phosphoribosylaminoimidazole-succinocarboxamide synthase.